A 201-amino-acid polypeptide reads, in one-letter code: Adenylyl-sulfate kinase (201 aa).

35–42 is a binding site for ATP; the sequence is GLSGSGKS. Ser109 (phosphoserine intermediate) is an active-site residue.

The protein belongs to the APS kinase family.

The enzyme catalyses adenosine 5'-phosphosulfate + ATP = 3'-phosphoadenylyl sulfate + ADP + H(+). It participates in sulfur metabolism; hydrogen sulfide biosynthesis; sulfite from sulfate: step 2/3. Functionally, catalyzes the synthesis of activated sulfate. The sequence is that of Adenylyl-sulfate kinase from Klebsiella pneumoniae (strain 342).